The chain runs to 169 residues: Lutropin/choriogonadotropin subunit beta (169 aa).

Residues 1–20 form the signal peptide; it reads MEMLQGLLLWMLLSVGGVWA. Intrachain disulfides connect Cys29/Cys77, Cys43/Cys92, Cys46/Cys130, Cys54/Cys108, Cys58/Cys110, and Cys113/Cys120. A glycan (N-linked (GlcNAc...) asparagine) is linked at Asn33. The interval 131-169 is disordered; the sequence is APQTSSSCKDPPSQPLTSTSTPTPGASRRSSHPLPINTS. Positions 145–158 are enriched in low complexity; sequence PLTSTSTPTPGASR.

Belongs to the glycoprotein hormones subunit beta family. In terms of assembly, heterodimer of a common alpha chain and a unique beta chain which confers biological specificity to thyrotropin, lutropin, follitropin and gonadotropin.

The protein localises to the secreted. Its function is as follows. Promotes spermatogenesis and ovulation by stimulating the testes and ovaries to synthesize steroids. The chain is Lutropin/choriogonadotropin subunit beta (LHB) from Equus asinus (Donkey).